Reading from the N-terminus, the 456-residue chain is Anthocyanidin 3-O-galactosyltransferase F3GT1 (456 aa).

An anthocyanidin is bound by residues Ser20, His22, and Gln83. His22 serves as the catalytic Proton acceptor. Asp118 serves as the catalytic Charge relay. His150 is a binding site for an anthocyanidin. Residues Ser281, Trp333, Ala334, His351, Asn355, Ser356, and Glu359 each contribute to the UDP site. Residue Gly374 coordinates an anthocyanidin.

Belongs to the UDP-glycosyltransferase family. Expressed at low levels in stems and leaves. Expressed in ovaries.

The catalysed reaction is cyanidin + UDP-alpha-D-galactose = cyanidin 3-O-beta-D-galactoside + UDP + H(+). It functions in the pathway pigment biosynthesis; anthocyanin biosynthesis. Its function is as follows. Involved in anthocyanin biosynthesis by catalyzing the galactosylation of cyanidin. Required for the accumulation of anthocyanin in red-fleshed kiwifruit varieties. Seems to be the key enzyme regulating the accumulation of anthocyanin in red-fleshed kiwi fruits. In Actinidia chinensis var. chinensis (Chinese soft-hair kiwi), this protein is Anthocyanidin 3-O-galactosyltransferase F3GT1.